The primary structure comprises 285 residues: Methylamine utilization protein MauF (285 aa).

The next 7 helical transmembrane spans lie at 39–59, 63–83, 120–140, 144–164, 184–204, 209–229, and 265–285; these read LGGLVTAVSGGILGAALLSQT, GVAVPALLMGLSFVGGLLSTW, AVGALILGCVLGIAGGLLGFG, FGALAGLGAAGIIYGAHQLGF, FPVWFIGGLYGLSLGLNYLTY, ILYLVTAAAVLSSNIGAAILL, and ALLDGVLLVAGGAALLTFAAL.

The protein resides in the cell membrane. Its pathway is one-carbon metabolism; methylamine degradation. This is Methylamine utilization protein MauF (mauF) from Methylorubrum extorquens (strain ATCC 14718 / DSM 1338 / JCM 2805 / NCIMB 9133 / AM1) (Methylobacterium extorquens).